A 325-amino-acid chain; its full sequence is ATP phosphoribosyltransferase (325 aa).

Belongs to the ATP phosphoribosyltransferase family. Long subfamily. Mg(2+) serves as cofactor.

It localises to the cytoplasm. It catalyses the reaction 1-(5-phospho-beta-D-ribosyl)-ATP + diphosphate = 5-phospho-alpha-D-ribose 1-diphosphate + ATP. The protein operates within amino-acid biosynthesis; L-histidine biosynthesis; L-histidine from 5-phospho-alpha-D-ribose 1-diphosphate: step 1/9. Feedback inhibited by histidine. Its function is as follows. Catalyzes the condensation of ATP and 5-phosphoribose 1-diphosphate to form N'-(5'-phosphoribosyl)-ATP (PR-ATP). Has a crucial role in the pathway because the rate of histidine biosynthesis seems to be controlled primarily by regulation of HisG enzymatic activity. The sequence is that of ATP phosphoribosyltransferase from Afipia carboxidovorans (strain ATCC 49405 / DSM 1227 / KCTC 32145 / OM5) (Oligotropha carboxidovorans).